Consider the following 875-residue polypeptide: GATOR2 complex protein MIOS (875 aa).

WD repeat units lie at residues 61–100 (PYMK…NSKF), 111–155 (KHAR…TPDI), 182–221 (GQND…QKMF), 223–261 (NTKA…KPVL), 265–306 (EQPK…TPIG), and 395–437 (RLRA…KQYT). The C4-type zinc finger occupies 735-781 (VSCNFCGKSISYSCSAVPHQGRGFSQYGVSGSPTKSKVTSCPGCRKP). Positions 737 and 740 each coordinate Zn(2+). Residues Ser-759 and Ser-766 each carry the phosphoserine modification. 11 residues coordinate Zn(2+): Cys-775, Cys-778, Cys-788, Cys-827, Cys-830, His-832, His-835, His-838, Cys-849, Cys-854, and Cys-858. Residues 782–863 (LPRCALCLIN…CTCKCMQLDT (82 aa)) form an RING-type; atypical zinc finger.

Belongs to the WD repeat mio family. As to quaternary structure, component of the GATOR2 subcomplex, composed of MIOS, SEC13, SEH1L, WDR24 and WDR59. The GATOR2 complex interacts with CASTOR1 and CASTOR2; the interaction is negatively regulated by arginine. CASTOR1 and CASTOR2 convey leucine availability via direct interaction with MIOS. The GATOR2 complex interacts with SESN1, SESN2 and SESN3; the interaction is negatively regulated by amino acids. Interacts with SAR1A and SAR1B; the interaction is direct, disrupted by leucine and mediates the interaction of SAR1A or SAR1B with the GATOR2 complex to negatively regulate the TORC1 signaling upon leucine deprivation.

The protein resides in the lysosome membrane. The GATOR2 complex is negatively regulated by the upstream amino acid sensors CASTOR1 and SESN2, which sequester the GATOR2 complex in absence of amino acids. In the presence of abundant amino acids, GATOR2 is released from CASTOR1 and SESN2 and activated. Functionally, as a component of the GATOR2 complex, functions as an activator of the amino acid-sensing branch of the mTORC1 signaling pathway. The GATOR2 complex indirectly activates mTORC1 through the inhibition of the GATOR1 subcomplex. GATOR2 probably acts as an E3 ubiquitin-protein ligase toward GATOR1. In the presence of abundant amino acids, the GATOR2 complex mediates ubiquitination of the NPRL2 core component of the GATOR1 complex, leading to GATOR1 inactivation. In the absence of amino acids, GATOR2 is inhibited, activating the GATOR1 complex. Within the GATOR2 complex, MIOS is required to prevent autoubiquitination of WDR24, the catalytic subunit of the complex. The GATOR2 complex is required for brain myelination. The protein is GATOR2 complex protein MIOS of Pongo abelii (Sumatran orangutan).